Consider the following 556-residue polypeptide: Zinc finger protein 18 (556 aa).

An SCAN box domain is found at 41–123 (RQLFRQFRYQ…TLVESLKGDP (83 aa)). The interval 169–195 (QDLPLQNTSSAPGELLSHGVKEESDLE) is disordered. A KRAB domain is found at 218-291 (EVGTALLPSL…HLHSAEKMAR (74 aa)). 5 C2H2-type zinc fingers span residues 415 to 437 (PTCR…QRTH), 443 to 465 (FHCR…QRTH), 471 to 493 (CKCD…EKIH), 499 to 521 (YKCP…QRVH), and 527 to 549 (YKCT…QRSH).

Belongs to the krueppel C2H2-type zinc-finger protein family.

The protein resides in the nucleus. In terms of biological role, may be involved in transcriptional regulation. This is Zinc finger protein 18 (Znf18) from Rattus norvegicus (Rat).